The primary structure comprises 868 residues: Programmed cell death 6-interacting protein (868 aa).

Alanine 2 is subject to N-acetylalanine. In terms of domain architecture, BRO1 spans 3 to 392 (TFISVQLKKT…AQMREATTLA (390 aa)). Residues 176–503 (TVDISPDTVG…NFRTVLDKAV (328 aa)) form an interaction with CHMP4A, CHMP4B and CHMP4C region. The tract at residues 176-868 (TVDISPDTVG…PPQQSYYPQQ (693 aa)) is interaction with EIAV p9. Lysine 215 is modified (N6-acetyllysine). Positions 418-868 (LTKSRSVIEQ…PPQQSYYPQQ (451 aa)) are interaction with SDCBP. At threonine 479 the chain carries Phosphothreonine. The residue at position 481 (serine 481) is a Phosphoserine. Residues 503–868 (VQADGQVKEC…PPQQSYYPQQ (366 aa)) are self-association. 2 disordered regions span residues 713 to 809 (IARE…YPGY) and 832 to 868 (PYPP…YPQQ). The tract at residues 717 to 720 (PSAP) is interaction with TSG101. Serine 730 is subject to Phosphoserine. Residues 737-763 (PTPPTPAPRTMPPTKPQPPARPPPPVL) show a composition bias toward pro residues. Phosphothreonine occurs at positions 738 and 741. Arginine 745 bears the Omega-N-methylarginine mark. A compositionally biased stretch (low complexity) spans 778–791 (GAGTAAPAPSQTPG). 2 stretches are compositionally biased toward pro residues: residues 792 to 807 (SAPP…PTYP) and 844 to 860 (APYP…PQPP). The tract at residues 801–806 (PPYPTY) is interaction with CEP55. The segment at 864–868 (YYPQQ) is essential to promote virus budding.

Self-associates. Interacts with SH3KBP1/CIN85. Interacts with PDCD6 in a calcium -dependent manner. Interacts with TSG101 in a calcium-dependent manner; PDCD6IP homooligomerization may be required for TSG101-binding. Interacts with SGSM3. Directly interacts with CHMP4A, CHMP4B and CHMP4C. Directly interacts with CEP55 in a 1:2 stoechiometry. The interaction with CEP55 is required for PDCD6IP targeting to the midbody. May interact with PDGFRB. Interacts with SH3GL1 and SH3GL2/endophilin-1. Forms a complex with SDCBP and SDC2. Found in a complex with F-actin, TJP1/ZO-1 and PARD3. Interacts with CD2AP. Interacts with ARRDC1. Interacts (via BRO1 domain) with the ATG12-ATG3 conjugate; this interaction is bridged by ATG12 and promotes multiple PDCD6IP-mediated functions such as endolysosomal trafficking, macroautophagy and exosome biogenesis. In terms of assembly, (Microbial infection) Interacts with HIV-1 p6. Interacts with HIV-1 p9. As to quaternary structure, (Microbial infection) Interacts with EIAV p9. (Microbial infection) Interacts with Murine leukemia virus Gag polyprotein (via LYPX(n)L motif). In terms of assembly, (Microbial infection) Interacts with ebola virus protein VP40 (via YPx(n)L/I motif). In terms of processing, may be phosphorylated on tyrosine residues by activated PDGFRB.

Its subcellular location is the cytoplasm. The protein resides in the cytosol. It localises to the melanosome. The protein localises to the cytoskeleton. It is found in the microtubule organizing center. Its subcellular location is the centrosome. The protein resides in the secreted. It localises to the extracellular exosome. The protein localises to the cell junction. It is found in the tight junction. Its subcellular location is the midbody. The protein resides in the midbody ring. Functionally, multifunctional protein involved in endocytosis, multivesicular body biogenesis, membrane repair, cytokinesis, apoptosis and maintenance of tight junction integrity. Class E VPS protein involved in concentration and sorting of cargo proteins of the multivesicular body (MVB) for incorporation into intralumenal vesicles (ILVs) that are generated by invagination and scission from the limiting membrane of the endosome. Binds to the phospholipid lysobisphosphatidic acid (LBPA) which is abundant in MVBs internal membranes. The MVB pathway requires the sequential function of ESCRT-O, -I,-II and -III complexes. The ESCRT machinery also functions in topologically equivalent membrane fission events, such as the terminal stages of cytokinesis. Adapter for a subset of ESCRT-III proteins, such as CHMP4, to function at distinct membranes. Required for completion of cytokinesis. May play a role in the regulation of both apoptosis and cell proliferation. Regulates exosome biogenesis in concert with SDC1/4 and SDCBP. By interacting with F-actin, PARD3 and TJP1 secures the proper assembly and positioning of actomyosin-tight junction complex at the apical sides of adjacent epithelial cells that defines a spatial membrane domain essential for the maintenance of epithelial cell polarity and barrier. Its function is as follows. (Microbial infection) Involved in HIV-1 virus budding. Can replace TSG101 it its role of supporting HIV-1 release; this function requires the interaction with CHMP4B. The ESCRT machinery also functions in topologically equivalent membrane fission events, such as enveloped virus budding (HIV-1 and other lentiviruses). The protein is Programmed cell death 6-interacting protein of Homo sapiens (Human).